A 233-amino-acid polypeptide reads, in one-letter code: Orotidine 5'-phosphate decarboxylase (233 aa).

Substrate contacts are provided by residues Asp10, Lys32, 59 to 68 (DLKFHDIPNT), Thr119, Arg180, Gln189, Gly209, and Arg210. The active-site Proton donor is Lys61.

It belongs to the OMP decarboxylase family. Type 1 subfamily. Homodimer.

The enzyme catalyses orotidine 5'-phosphate + H(+) = UMP + CO2. The protein operates within pyrimidine metabolism; UMP biosynthesis via de novo pathway; UMP from orotate: step 2/2. Its function is as follows. Catalyzes the decarboxylation of orotidine 5'-monophosphate (OMP) to uridine 5'-monophosphate (UMP). The sequence is that of Orotidine 5'-phosphate decarboxylase from Pasteurella multocida (strain Pm70).